A 361-amino-acid polypeptide reads, in one-letter code: UDP-N-acetylglucosamine--N-acetylmuramyl-(pentapeptide) pyrophosphoryl-undecaprenol N-acetylglucosamine transferase (361 aa).

UDP-N-acetyl-alpha-D-glucosamine-binding positions include 13–15, asparagine 125, arginine 167, serine 196, isoleucine 251, 270–275, and glutamine 296; these read TGG and ALTVTE.

The protein belongs to the glycosyltransferase 28 family. MurG subfamily.

Its subcellular location is the cell inner membrane. The catalysed reaction is di-trans,octa-cis-undecaprenyl diphospho-N-acetyl-alpha-D-muramoyl-L-alanyl-D-glutamyl-meso-2,6-diaminopimeloyl-D-alanyl-D-alanine + UDP-N-acetyl-alpha-D-glucosamine = di-trans,octa-cis-undecaprenyl diphospho-[N-acetyl-alpha-D-glucosaminyl-(1-&gt;4)]-N-acetyl-alpha-D-muramoyl-L-alanyl-D-glutamyl-meso-2,6-diaminopimeloyl-D-alanyl-D-alanine + UDP + H(+). Its pathway is cell wall biogenesis; peptidoglycan biosynthesis. Its function is as follows. Cell wall formation. Catalyzes the transfer of a GlcNAc subunit on undecaprenyl-pyrophosphoryl-MurNAc-pentapeptide (lipid intermediate I) to form undecaprenyl-pyrophosphoryl-MurNAc-(pentapeptide)GlcNAc (lipid intermediate II). The polypeptide is UDP-N-acetylglucosamine--N-acetylmuramyl-(pentapeptide) pyrophosphoryl-undecaprenol N-acetylglucosamine transferase (Psychrobacter cryohalolentis (strain ATCC BAA-1226 / DSM 17306 / VKM B-2378 / K5)).